We begin with the raw amino-acid sequence, 192 residues long: Charged multivesicular body protein 1 (192 aa).

Coiled coils occupy residues 7 to 35 and 102 to 125; these read QLKF…KLKK and NMDL…LDVQ. The segment at 164 to 192 is disordered; that stretch reads QMGSAPSEKVQQGETDELTERLNRLKQKN.

The protein belongs to the SNF7 family. As to quaternary structure, probable peripherally associated component of the endosomal sorting required for transport complex III (ESCRT-III).

Its subcellular location is the endosome membrane. Probable peripherally associated component of the endosomal sorting required for transport complex III (ESCRT-III) which is involved in multivesicular bodies (MVBs) formation and sorting of endosomal cargo proteins into MVBs. MVBs contain intraluminal vesicles (ILVs) that are generated by invagination and scission from the limiting membrane of the endosome and are delivered to lysosomes enabling degradation of membrane proteins. The sequence is that of Charged multivesicular body protein 1 (chmp1) from Dictyostelium discoideum (Social amoeba).